Reading from the N-terminus, the 366-residue chain is Protein lifeguard 1 (366 aa).

The tract at residues 1–141 (MSHEKSFLVS…GPPSYYDNQD (141 aa)) is disordered. 2 stretches are compositionally biased toward pro residues: residues 14–44 (YPPP…PFQP) and 67–109 (GPYP…PNPY). The next 7 helical transmembrane spans lie at 160–180 (VFLV…VFTF), 192–212 (VWTY…LSCC), 223–243 (LVAL…IASF), 248–268 (AVIM…IFSM), 278–298 (VGVL…CIFI), 302–322 (VLEI…LAVD), and 341–361 (FAAL…LTII).

It belongs to the BI1 family. LFG subfamily.

The protein localises to the membrane. In terms of biological role, potential apoptotic regulator. This chain is Protein lifeguard 1 (GRINA), found in Bos taurus (Bovine).